Reading from the N-terminus, the 141-residue chain is Small ribosomal subunit protein bS6 (141 aa).

The disordered stretch occupies residues 96 to 141 (VTGPSAMMKTVEREEFRKASQAGNQTTAPAASPADHAAAPASADRS). The segment covering 123–141 (APAASPADHAAAPASADRS) has biased composition (low complexity).

It belongs to the bacterial ribosomal protein bS6 family.

Its function is as follows. Binds together with bS18 to 16S ribosomal RNA. The polypeptide is Small ribosomal subunit protein bS6 (Verminephrobacter eiseniae (strain EF01-2)).